Here is a 409-residue protein sequence, read N- to C-terminus: Wadjet protein JetD (409 aa).

Component of antiplasmid transformation system Wadjet type I, composed of JetA, JetB, JetC and JetD. Expression of Wadjet type I in B.subtilis (strain BEST7003) reduces the transformation efficiency of plasmid pHCMC05. In Bacillus cereus (strain Q1), this protein is Wadjet protein JetD.